The chain runs to 447 residues: Cysteine--tRNA ligase (447 aa).

Cys28 is a binding site for Zn(2+). Positions 30-40 match the 'HIGH' region motif; that stretch reads PTVYNYIHIGN. The Zn(2+) site is built by Cys211, His236, and Glu240. The 'KMSKS' region motif lies at 268 to 272; it reads KMSKS. Lys271 is an ATP binding site.

This sequence belongs to the class-I aminoacyl-tRNA synthetase family. In terms of assembly, monomer. Requires Zn(2+) as cofactor.

It localises to the cytoplasm. It carries out the reaction tRNA(Cys) + L-cysteine + ATP = L-cysteinyl-tRNA(Cys) + AMP + diphosphate. This Streptococcus agalactiae serotype V (strain ATCC BAA-611 / 2603 V/R) protein is Cysteine--tRNA ligase.